The sequence spans 547 residues: Ribosome protection protein VmlR (547 aa).

One can recognise an ABC transporter 1 domain in the interval Val-5–Gln-200. Position 37 to 44 (Gly-37 to Ser-44) interacts with ATP. Residues Gly-183–Lys-289 form an antibiotic resistance domain (ARD) region. Coiled coils occupy residues Glu-193–Ser-222 and Ala-245–Glu-269. Residues Leu-292–Thr-504 form the ABC transporter 2 domain. Gly-324–Thr-331 is a binding site for ATP. Residues Lys-483 to Asp-547 are C-terminal extension (CTE). Positions Val-488–Gln-543 form a coiled coil.

The protein belongs to the ABC transporter superfamily. ABCF family. ARE2 subfamily. As to quaternary structure, binds within the E-site of the 70S ribosome, where it contacts ribosomal proteins L1, L5, L33-1, S7, S11, the 16 and 23S rRNAs and the acceptor arm of the P-site tRNA.

It is found in the cytoplasm. Its function is as follows. Recognizes and binds in the vacant E-site of ribosomes stalled by some peptidyltransferase center (PTC)-targeting antibiotics. Makes contact with the PTC and both ribosomal subunits. Induces conformational changes in the P-site, which allows it to dislodge the antibiotic from its PTC binding site. Binds to ribosomes either directly following translation initation or subsequent to E tRNA release during elongation. Involved in resistance to a narrow spectrum of antibiotics (the streptogramin A antibiotic virginiamycin M, the lincosamide antibiotic lincomycin and the pleuromutilin antibiotic tiamulin). This chain is Ribosome protection protein VmlR, found in Bacillus subtilis (strain 168).